Here is a 345-residue protein sequence, read N- to C-terminus: tRNA N6-adenosine threonylcarbamoyltransferase (345 aa).

Residues histidine 115 and histidine 119 each contribute to the Fe cation site. Substrate contacts are provided by residues 137-141 (LVSGG), aspartate 170, glycine 183, aspartate 187, and asparagine 276. Aspartate 306 contacts Fe cation.

Belongs to the KAE1 / TsaD family. It depends on Fe(2+) as a cofactor.

Its subcellular location is the cytoplasm. The catalysed reaction is L-threonylcarbamoyladenylate + adenosine(37) in tRNA = N(6)-L-threonylcarbamoyladenosine(37) in tRNA + AMP + H(+). Its function is as follows. Required for the formation of a threonylcarbamoyl group on adenosine at position 37 (t(6)A37) in tRNAs that read codons beginning with adenine. Is involved in the transfer of the threonylcarbamoyl moiety of threonylcarbamoyl-AMP (TC-AMP) to the N6 group of A37, together with TsaE and TsaB. TsaD likely plays a direct catalytic role in this reaction. This is tRNA N6-adenosine threonylcarbamoyltransferase from Pediococcus pentosaceus (strain ATCC 25745 / CCUG 21536 / LMG 10740 / 183-1w).